The primary structure comprises 438 residues: tRNA modification GTPase MnmE (438 aa).

Residues Arg-20, Glu-76, and Lys-115 each contribute to the (6S)-5-formyl-5,6,7,8-tetrahydrofolate site. Residues 210–370 (NFTIMILGRR…LKCFINKIVD (161 aa)) form the TrmE-type G domain. K(+) is bound at residue Asn-220. Residues 220–225 (NVGKST), 239–245 (TNIPGTT), and 264–267 (DTAG) contribute to the GTP site. A Mg(2+)-binding site is contributed by Ser-224. 3 residues coordinate K(+): Thr-239, Ile-241, and Thr-244. Position 245 (Thr-245) interacts with Mg(2+). Position 438 (Lys-438) interacts with (6S)-5-formyl-5,6,7,8-tetrahydrofolate.

This sequence belongs to the TRAFAC class TrmE-Era-EngA-EngB-Septin-like GTPase superfamily. TrmE GTPase family. In terms of assembly, homodimer. Heterotetramer of two MnmE and two MnmG subunits. K(+) is required as a cofactor.

The protein resides in the cytoplasm. In terms of biological role, exhibits a very high intrinsic GTPase hydrolysis rate. Involved in the addition of a carboxymethylaminomethyl (cmnm) group at the wobble position (U34) of certain tRNAs, forming tRNA-cmnm(5)s(2)U34. The sequence is that of tRNA modification GTPase MnmE from Carsonella ruddii (strain PV).